A 131-amino-acid polypeptide reads, in one-letter code: Plastocyanin (131 aa).

Residues 1-34 (MKFFASLSKRFAPVLSLVVLVAGTLLLSAAPASA) form the signal peptide. The region spanning 35 to 131 (ATVQIKMGTD…AGMVGTITVE (97 aa)) is the Plastocyanin-like domain. The Cu cation site is built by histidine 73, cysteine 116, histidine 119, and methionine 124.

It belongs to the plastocyanin family. It depends on Cu(2+) as a cofactor.

It is found in the cellular thylakoid membrane. Its function is as follows. Participates in electron transfer between P700 and the cytochrome b6-f complex in photosystem I. This chain is Plastocyanin (petE), found in Prochlorothrix hollandica.